We begin with the raw amino-acid sequence, 508 residues long: uncharacterized protein (508 aa).

One can recognise a Resolvase/invertase-type recombinase catalytic domain in the interval 3 to 163; it reads KAIAYMRFSS…LSWKKKRQDA (161 aa). Serine 11 functions as the O-(5'-phospho-DNA)-serine intermediate in the catalytic mechanism. The segment at residues 175–290 is a DNA-binding region (recombinase); that stretch reads PRWLSLDDKR…QEIRLAPFGI (116 aa).

This is an uncharacterized protein from Escherichia coli (strain K12).